We begin with the raw amino-acid sequence, 352 residues long: MDFLRNLFSQTLSLGSQKERLLDELTLEGVARYMQSERCRRVICLVGAGISTSAGIPDFRSPSTGLYDNLEKYHLPYPEAIFEISYFKKHPEPFFALAKELYPGQFKPTICHYFMRLLKDKGLLLRCYTQNIDTLERIAGLEQEDLVEAHGTFYTSHCVSASCRHEYPLSWMKEKIFSEVTPKCEDCQSLVKPDIVFFGESLPARFFSCMQSDFLKVDLLLVMGTSLQVQPFASLISKAPLSTPRLLINKEKAGQSDPFLGMIMGLGGGMDFDSKKAYRDVAWLGECDQGCLALAELLGWKKELEDLVRREHASIDAQSGAGVPNPSTSASPKKSPPPAKDEARTTEREKPQ.

S16 bears the Phosphoserine mark. The region spanning 20–301 (RLLDELTLEG…LALAELLGWK (282 aa)) is the Deacetylase sirtuin-type domain. NAD(+) is bound by residues 48 to 52 (AGIST) and 58 to 60 (DFR). S63 bears the Phosphoserine mark. An NAD(+)-binding site is contributed by 130–133 (QNID). Residue H150 is the Proton acceptor of the active site. Zn(2+)-binding residues include C158 and C163. Residue S170 is modified to Phosphoserine. Positions 184 and 187 each coordinate Zn(2+). Residues 225–226 (TS), 249–251 (NKE), and C287 each bind NAD(+). Positions 314-352 (SIDAQSGAGVPNPSTSASPKKSPPPAKDEARTTEREKPQ) are disordered. A compositionally biased stretch (low complexity) spans 324-333 (PNPSTSASPK). Phosphoserine is present on residues S331 and S335. Over residues 339–352 (AKDEARTTEREKPQ) the composition is skewed to basic and acidic residues.

This sequence belongs to the sirtuin family. Class I subfamily. In terms of assembly, interacts with CDC20, FOXO3 and FZR1. Associates with microtubules in primary cortical mature neurons. Homotrimer. Interacts (via both phosphorylated, unphosphorylated, active or inactive forms) with HDAC6; the interaction is necessary for the complex to interact with alpha-tubulin, suggesting that these proteins belong to a large complex that deacetylates the cytoskeleton. Interacts with FOXO1; the interaction is disrupted upon serum-starvation or oxidative stress, leading to increased level of acetylated FOXO1 and induction of autophagy. Interacts with RELA; the interaction occurs in the cytoplasm and is increased in a TNF-alpha-dependent manner. Interacts with HOXA10; the interaction is direct. Interacts with YWHAB and YWHAG; the interactions occur in a AKT-dependent manner and increase SIRT2-dependent TP53 deacetylation. Interacts with MAPK1/ERK2 and MAPK3/ERK1; the interactions increase SIRT2 stability and deacetylation activity. Interacts (phosphorylated form) with KMT5A isoform 2; the interaction is direct, stimulates KMT5A-mediated methyltransferase activity on histone at 'Lys-20' (H4K20me1) and is increased in a H(2)O(2)-induced oxidative stress-dependent manner. Interacts with G6PD; the interaction is enhanced by H(2)O(2) treatment. Interacts with a G1/S-specific cyclin E-CDK2 complex. Interacts with AURKA, CDK5R1 (p35 form) and CDK5 and HIF1A. Interacts with the tRNA ligase SARS1; recruited to the VEGFA promoter via interaction with SARS1. Interacts with BEX4; negatively regulates alpha-tubulin deacetylation by SIRT2. Interacts with MORN3; the interaction enhances the ubiquitination of p53/TP53. Zn(2+) serves as cofactor. Post-translationally, phosphorylated at phosphoserine and phosphothreonine. Phosphorylated at Ser-331 by a mitotic kinase CDK1/cyclin B at the G2/M transition; phosphorylation regulates the delay in cell-cycle progression. Phosphorylated at Ser-331 by a mitotic kinase G1/S-specific cyclin E/Cdk2 complex; phosphorylation inactivates SIRT2-mediated alpha-tubulin deacetylation and thereby negatively regulates cell adhesion, cell migration and neurite outgrowth during neuronal differentiation. Phosphorylated by cyclin A/Cdk2 and p35-Cdk5 complexes and to a lesser extent by the cyclin D3/Cdk4 and cyclin B/Cdk1, in vitro. Dephosphorylated at Ser-331 by CDC14A and CDC14B around early anaphase. Acetylated by EP300; acetylation leads both to the decreased of SIRT2-mediated alpha-tubulin deacetylase activity and SIRT2-mediated down-regulation of TP53 transcriptional activity. In terms of processing, ubiquitinated.

Its subcellular location is the nucleus. It localises to the cytoplasm. The protein resides in the perinuclear region. The protein localises to the cytoskeleton. It is found in the microtubule organizing center. Its subcellular location is the centrosome. It localises to the centriole. The protein resides in the spindle. The protein localises to the midbody. It is found in the chromosome. Its subcellular location is the perikaryon. It localises to the cell projection. The protein resides in the growth cone. The protein localises to the myelin membrane. The catalysed reaction is N(6)-acetyl-L-lysyl-[protein] + NAD(+) + H2O = 2''-O-acetyl-ADP-D-ribose + nicotinamide + L-lysyl-[protein]. It carries out the reaction N(6)-tetradecanoyl-L-lysyl-[protein] + NAD(+) + H2O = 2''-O-tetradecanoyl-ADP-D-ribose + nicotinamide + L-lysyl-[protein]. The enzyme catalyses N(6)-hexadecanoyl-L-lysyl-[protein] + NAD(+) + H2O = 2''-O-hexadecanoyl-ADP-D-ribose + nicotinamide + L-lysyl-[protein]. With respect to regulation, inhibited by Sirtinol, A3 and M15 small molecules. Inhibited by nicotinamide. Inhibited by a macrocyclic peptide inhibitor S2iL5. Inhibited by EP300-induced acetylation. Its function is as follows. NAD-dependent protein deacetylase, which deacetylates internal lysines on histone and alpha-tubulin as well as many other proteins such as key transcription factors. Participates in the modulation of multiple and diverse biological processes such as cell cycle control, genomic integrity, microtubule dynamics, cell differentiation, metabolic networks, and autophagy. Plays a major role in the control of cell cycle progression and genomic stability. Functions in the antephase checkpoint preventing precocious mitotic entry in response to microtubule stress agents, and hence allowing proper inheritance of chromosomes. Positively regulates the anaphase promoting complex/cyclosome (APC/C) ubiquitin ligase complex activity by deacetylating CDC20 and FZR1, then allowing progression through mitosis. Associates both with chromatin at transcriptional start sites (TSSs) and enhancers of active genes. Plays a role in cell cycle and chromatin compaction through epigenetic modulation of the regulation of histone H4 'Lys-20' methylation (H4K20me1) during early mitosis. Specifically deacetylates histone H4 at 'Lys-16' (H4K16ac) between the G2/M transition and metaphase enabling H4K20me1 deposition by KMT5A leading to ulterior levels of H4K20me2 and H4K20me3 deposition throughout cell cycle, and mitotic S-phase progression. Deacetylates KMT5A modulating KMT5A chromatin localization during the mitotic stress response. Also deacetylates histone H3 at 'Lys-57' (H3K56ac) during the mitotic G2/M transition. During oocyte meiosis progression, may deacetylate histone H4 at 'Lys-16' (H4K16ac) and alpha-tubulin, regulating spindle assembly and chromosome alignment by influencing microtubule dynamics and kinetochore function. Deacetylates histone H4 at 'Lys-16' (H4K16ac) at the VEGFA promoter and thereby contributes to regulate expression of VEGFA, a key regulator of angiogenesis. Deacetylates alpha-tubulin at 'Lys-40' and hence controls neuronal motility, oligodendroglial cell arbor projection processes and proliferation of non-neuronal cells. Phosphorylation at Ser-368 by a G1/S-specific cyclin E-CDK2 complex inactivates SIRT2-mediated alpha-tubulin deacetylation, negatively regulating cell adhesion, cell migration and neurite outgrowth during neuronal differentiation. Deacetylates PARD3 and participates in the regulation of Schwann cell peripheral myelination formation during early postnatal development and during postinjury remyelination. Involved in several cellular metabolic pathways. Plays a role in the regulation of blood glucose homeostasis by deacetylating and stabilizing phosphoenolpyruvate carboxykinase PCK1 activity in response to low nutrient availability. Acts as a key regulator in the pentose phosphate pathway (PPP) by deacetylating and activating the glucose-6-phosphate G6PD enzyme, and therefore, stimulates the production of cytosolic NADPH to counteract oxidative damage. Maintains energy homeostasis in response to nutrient deprivation as well as energy expenditure by inhibiting adipogenesis and promoting lipolysis. Attenuates adipocyte differentiation by deacetylating and promoting FOXO1 interaction to PPARG and subsequent repression of PPARG-dependent transcriptional activity. Plays a role in the regulation of lysosome-mediated degradation of protein aggregates by autophagy in neuronal cells. Deacetylates FOXO1 in response to oxidative stress or serum deprivation, thereby negatively regulating FOXO1-mediated autophagy. Deacetylates a broad range of transcription factors and co-regulators regulating target gene expression. Deacetylates transcriptional factor FOXO3 stimulating the ubiquitin ligase SCF(SKP2)-mediated FOXO3 ubiquitination and degradation. Deacetylates HIF1A and therefore promotes HIF1A degradation and inhibition of HIF1A transcriptional activity in tumor cells in response to hypoxia. Deacetylates RELA in the cytoplasm inhibiting NF-kappaB-dependent transcription activation upon TNF-alpha stimulation. Inhibits transcriptional activation by deacetylating p53/TP53 and EP300. Also deacetylates EIF5A. Functions as a negative regulator on oxidative stress-tolerance in response to anoxia-reoxygenation conditions. Plays a role as tumor suppressor. In addition to protein deacetylase activity, also has activity toward long-chain fatty acyl groups and mediates protein-lysine demyristoylation and depalmitoylation of target proteins, such as ARF6 and KRAS, thereby regulating their association with membranes. The sequence is that of NAD-dependent protein deacetylase sirtuin-2 (SIRT2) from Pongo abelii (Sumatran orangutan).